Reading from the N-terminus, the 790-residue chain is Ice-structuring glycoprotein (790 aa).

Positions 1–5 (VTAAP) are excised as a propeptide.

Post-translationally, O-glycosylated; contains disaccharide galactose-N-acetylgalactosamine attached to threonines in AFGP8 and AFGP7. In terms of tissue distribution, synthesized by the liver and secreted into the blood from which they become distributed to almost the entire extracellular space.

The protein localises to the secreted. Functionally, antifreeze proteins lower the blood freezing point. The protein is Ice-structuring glycoprotein (afgp8) of Notothenia neglecta (Yellowbelly rockcod).